We begin with the raw amino-acid sequence, 111 residues long: Disintegrin CV-11-alpha (111 aa).

The signal sequence occupies residues 1-20; that stretch reads MIQVLLVIICLAVFPYQGSS. Positions 21–46 are excised as a propeptide; sequence IILESGNVNDFELVYPKKVTVLPTGA. A Disintegrin domain is found at 47 to 111; sequence MNSAHPCCDP…SDCPRNPWKD (65 aa). 4 disulfide bridges follow: C53–C76, C67–C73, C72–C97, and C85–C104. The Cell attachment site motif lies at 89 to 91; that stretch reads KGD.

This sequence belongs to the disintegrin family. Dimeric disintegrin subfamily. Heterodimer with subunit beta; disulfide-linked. As to expression, expressed by the venom gland.

It localises to the secreted. Inhibits ADP-induced human platelet aggregation. Antagonist of alpha-IIb/beta-3 (ITGA2B/ITGB3). The sequence is that of Disintegrin CV-11-alpha from Cerastes vipera (Sahara sand viper).